The primary structure comprises 343 residues: Aspartate carbamoyltransferase catalytic subunit (343 aa).

Arginine 91 and threonine 92 together coordinate carbamoyl phosphate. Lysine 119 serves as a coordination point for L-aspartate. Positions 141, 171, and 174 each coordinate carbamoyl phosphate. L-aspartate-binding residues include arginine 204 and arginine 259. Carbamoyl phosphate contacts are provided by glycine 300 and proline 301.

The protein belongs to the aspartate/ornithine carbamoyltransferase superfamily. ATCase family. As to quaternary structure, heterododecamer (2C3:3R2) of six catalytic PyrB chains organized as two trimers (C3), and six regulatory PyrI chains organized as three dimers (R2).

The catalysed reaction is carbamoyl phosphate + L-aspartate = N-carbamoyl-L-aspartate + phosphate + H(+). Its pathway is pyrimidine metabolism; UMP biosynthesis via de novo pathway; (S)-dihydroorotate from bicarbonate: step 2/3. Its function is as follows. Catalyzes the condensation of carbamoyl phosphate and aspartate to form carbamoyl aspartate and inorganic phosphate, the committed step in the de novo pyrimidine nucleotide biosynthesis pathway. This is Aspartate carbamoyltransferase catalytic subunit from Burkholderia cenocepacia (strain HI2424).